The chain runs to 76 residues: DNA-directed RNA polymerase subunit omega (76 aa).

It belongs to the RNA polymerase subunit omega family. As to quaternary structure, in cyanobacteria the RNAP catalytic core is composed of 2 alpha, 1 beta, 1 beta', 1 gamma and 1 omega subunit. When a sigma factor is associated with the core the holoenzyme is formed, which can initiate transcription.

It carries out the reaction RNA(n) + a ribonucleoside 5'-triphosphate = RNA(n+1) + diphosphate. Its function is as follows. Promotes RNA polymerase assembly. Latches the N- and C-terminal regions of the beta' subunit thereby facilitating its interaction with the beta and alpha subunits. The protein is DNA-directed RNA polymerase subunit omega of Acaryochloris marina (strain MBIC 11017).